Consider the following 421-residue polypeptide: UDP-N-acetylglucosamine 1-carboxyvinyltransferase (421 aa).

22 to 23 is a binding site for phosphoenolpyruvate; sequence KN. Arg-93 serves as a coordination point for UDP-N-acetyl-alpha-D-glucosamine. Catalysis depends on Cys-117, which acts as the Proton donor. Cys-117 is subject to 2-(S-cysteinyl)pyruvic acid O-phosphothioketal. UDP-N-acetyl-alpha-D-glucosamine is bound by residues 122–126, Asp-308, and Ile-330; that span reads RPVDL.

This sequence belongs to the EPSP synthase family. MurA subfamily.

Its subcellular location is the cytoplasm. The catalysed reaction is phosphoenolpyruvate + UDP-N-acetyl-alpha-D-glucosamine = UDP-N-acetyl-3-O-(1-carboxyvinyl)-alpha-D-glucosamine + phosphate. It participates in cell wall biogenesis; peptidoglycan biosynthesis. Cell wall formation. Adds enolpyruvyl to UDP-N-acetylglucosamine. This Pseudomonas fluorescens (strain Pf0-1) protein is UDP-N-acetylglucosamine 1-carboxyvinyltransferase.